Reading from the N-terminus, the 170-residue chain is Acireductone dioxygenase (170 aa).

Histidine 99, histidine 101, glutamate 105, and histidine 144 together coordinate Fe(2+). Positions 99, 101, 105, and 144 each coordinate Ni(2+).

It belongs to the acireductone dioxygenase (ARD) family. As to quaternary structure, monomer. Fe(2+) is required as a cofactor. Ni(2+) serves as cofactor.

It carries out the reaction 1,2-dihydroxy-5-(methylsulfanyl)pent-1-en-3-one + O2 = 3-(methylsulfanyl)propanoate + CO + formate + 2 H(+). It catalyses the reaction 1,2-dihydroxy-5-(methylsulfanyl)pent-1-en-3-one + O2 = 4-methylsulfanyl-2-oxobutanoate + formate + 2 H(+). Its pathway is amino-acid biosynthesis; L-methionine biosynthesis via salvage pathway; L-methionine from S-methyl-5-thio-alpha-D-ribose 1-phosphate: step 5/6. Functionally, catalyzes 2 different reactions between oxygen and the acireductone 1,2-dihydroxy-3-keto-5-methylthiopentene (DHK-MTPene) depending upon the metal bound in the active site. Fe-containing acireductone dioxygenase (Fe-ARD) produces formate and 2-keto-4-methylthiobutyrate (KMTB), the alpha-ketoacid precursor of methionine in the methionine recycle pathway. Ni-containing acireductone dioxygenase (Ni-ARD) produces methylthiopropionate, carbon monoxide and formate, and does not lie on the methionine recycle pathway. This chain is Acireductone dioxygenase, found in Bacillus thuringiensis subsp. konkukian (strain 97-27).